The following is a 235-amino-acid chain: Purine nucleoside phosphorylase DeoD-type (235 aa).

His4 contributes to the a purine D-ribonucleoside binding site. Phosphate-binding positions include Gly20, Arg24, Arg43, and 87-90 (RVGT). Residues Glu162, 179-181 (EME), and 203-204 (SD) contribute to the a purine D-ribonucleoside site. Asp204 (proton donor) is an active-site residue.

This sequence belongs to the PNP/UDP phosphorylase family. As to quaternary structure, homohexamer; trimer of homodimers.

The enzyme catalyses a purine D-ribonucleoside + phosphate = a purine nucleobase + alpha-D-ribose 1-phosphate. It catalyses the reaction a purine 2'-deoxy-D-ribonucleoside + phosphate = a purine nucleobase + 2-deoxy-alpha-D-ribose 1-phosphate. Functionally, catalyzes the reversible phosphorolytic breakdown of the N-glycosidic bond in the beta-(deoxy)ribonucleoside molecules, with the formation of the corresponding free purine bases and pentose-1-phosphate. This is Purine nucleoside phosphorylase DeoD-type from Bacillus cereus (strain ATCC 14579 / DSM 31 / CCUG 7414 / JCM 2152 / NBRC 15305 / NCIMB 9373 / NCTC 2599 / NRRL B-3711).